Here is a 99-residue protein sequence, read N- to C-terminus: MPRSIKKGPFIDGHLLEKIQAAQATNAKKVIKTWSRRSTILPESVGLTFAVHNGRKFVPVFVTENMVGHKLGEFAPTRTFHGHSGDKKAKVAKGGPGGR.

The disordered stretch occupies residues 77 to 99 (TRTFHGHSGDKKAKVAKGGPGGR).

The protein belongs to the universal ribosomal protein uS19 family.

Protein S19 forms a complex with S13 that binds strongly to the 16S ribosomal RNA. This chain is Small ribosomal subunit protein uS19, found in Sorangium cellulosum (strain So ce56) (Polyangium cellulosum (strain So ce56)).